Here is a 340-residue protein sequence, read N- to C-terminus: Adenine deaminase (340 aa).

3 residues coordinate Zn(2+): H17, H19, and H197. The active-site Proton donor is the E200. Zn(2+) is bound at residue D278. Residue D279 coordinates substrate.

It belongs to the metallo-dependent hydrolases superfamily. Adenosine and AMP deaminases family. Adenine deaminase type 2 subfamily. The cofactor is Zn(2+).

The enzyme catalyses adenine + H2O + H(+) = hypoxanthine + NH4(+). Functionally, catalyzes the hydrolytic deamination of adenine to hypoxanthine. Plays an important role in the purine salvage pathway and in nitrogen catabolism. In Streptomyces coelicolor (strain ATCC BAA-471 / A3(2) / M145), this protein is Adenine deaminase.